Consider the following 884-residue polypeptide: Chitin synthase E (884 aa).

Disordered stretches follow at residues Met1–Ser58 and Ala73–Gly108. Composition is skewed to polar residues over residues Gln37–Tyr48 and Glu84–Ala93. Residue Asn44 is glycosylated (N-linked (GlcNAc...) asparagine). Over residues Ser95–Ser105 the composition is skewed to basic and acidic residues. An N-linked (GlcNAc...) asparagine glycan is attached at Asn301. 7 consecutive transmembrane segments (helical) span residues Trp513–Tyr532, Ile556–Val576, Ile597–Ala617, Tyr635–Phe655, Gly681–Leu701, Ile708–Val728, and Val812–Gly832. The N-linked (GlcNAc...) asparagine glycan is linked to Asn840. The helical transmembrane segment at Val852–Leu872 threads the bilayer.

The protein belongs to the chitin synthase family. Class III subfamily.

It localises to the cell membrane. It catalyses the reaction [(1-&gt;4)-N-acetyl-beta-D-glucosaminyl](n) + UDP-N-acetyl-alpha-D-glucosamine = [(1-&gt;4)-N-acetyl-beta-D-glucosaminyl](n+1) + UDP + H(+). Polymerizes chitin, a structural polymer of the cell wall and septum, by transferring the sugar moiety of UDP-GlcNAc to the non-reducing end of the growing chitin polymer. Plays an important role in septal growth or maintenance. Mediates colony spore formation. ChsE and chsD seem to play a functionally redundant role in lateral cell wall chitin synthesis. Involved in resistance to echinocandins. This Aspergillus niger (strain ATCC MYA-4892 / CBS 513.88 / FGSC A1513) protein is Chitin synthase E.